The primary structure comprises 794 residues: Histone-lysine N-methyltransferase, H3 lysine-9 specific SUVH5 (794 aa).

2 disordered regions span residues 187 to 210 (VGRDLSPNMGSKFSKNGKTAKRSI) and 254 to 276 (SPVKPSEKRNGDYGEGSMRKNSE). Residues 194 to 203 (NMGSKFSKNG) are compositionally biased toward polar residues. A compositionally biased stretch (basic and acidic residues) spans 258-276 (PSEKRNGDYGEGSMRKNSE). Residues 365 to 515 (GTVPGVEVGD…KLVFKFKLRR (151 aa)) enclose the YDG domain. The Pre-SET domain occupies 585 to 644 (KSCGCTNGCSKSKNCACIVKNGGKIPYYDGAIVEIKPLVYECGPHCKCPPSCNMRVSQHG). In terms of domain architecture, SET spans 647–764 (IKLEIFKTES…PLQELSYDYN (118 aa)). The Post-SET domain occupies 778–794 (KKKFCYCGSAECSGRLY).

It belongs to the class V-like SAM-binding methyltransferase superfamily. Histone-lysine methyltransferase family. Suvar3-9 subfamily. As to expression, expressed in leaves stems and flowers.

The protein resides in the nucleus. It localises to the chromosome. Its subcellular location is the centromere. The enzyme catalyses N(6)-methyl-L-lysyl(9)-[histone H3] + S-adenosyl-L-methionine = N(6),N(6)-dimethyl-L-lysyl(9)-[histone H3] + S-adenosyl-L-homocysteine + H(+). The catalysed reaction is L-lysyl(9)-[histone H3] + S-adenosyl-L-methionine = N(6)-methyl-L-lysyl(9)-[histone H3] + S-adenosyl-L-homocysteine + H(+). Its function is as follows. Histone methyltransferase. Methylates 'Lys-9' of histone H3. H3 'Lys-9' methylation represents a specific tag for epigenetic transcriptional repression. In Arabidopsis thaliana (Mouse-ear cress), this protein is Histone-lysine N-methyltransferase, H3 lysine-9 specific SUVH5 (SUVH5).